The sequence spans 486 residues: Malonate-semialdehyde dehydrogenase (486 aa).

Residues Phe-154, Lys-178, Glu-181, Arg-182, and Ser-231 each coordinate NAD(+). The active-site Nucleophile is the Cys-286. Glu-386 contacts NAD(+).

The protein belongs to the aldehyde dehydrogenase family. IolA subfamily. Homotetramer.

The catalysed reaction is 3-oxopropanoate + NAD(+) + CoA + H2O = hydrogencarbonate + acetyl-CoA + NADH + H(+). The enzyme catalyses 2-methyl-3-oxopropanoate + NAD(+) + CoA + H2O = propanoyl-CoA + hydrogencarbonate + NADH + H(+). It participates in polyol metabolism; myo-inositol degradation into acetyl-CoA; acetyl-CoA from myo-inositol: step 7/7. Catalyzes the oxidation of malonate semialdehyde (MSA) and methylmalonate semialdehyde (MMSA) into acetyl-CoA and propanoyl-CoA, respectively. Is involved in a myo-inositol catabolic pathway. Bicarbonate, and not CO2, is the end-product of the enzymatic reaction. The chain is Malonate-semialdehyde dehydrogenase from Bacillus cereus (strain B4264).